Here is a 965-residue protein sequence, read N- to C-terminus: Glycine dehydrogenase (decarboxylating) (965 aa).

At Lys711 the chain carries N6-(pyridoxal phosphate)lysine.

Belongs to the GcvP family. As to quaternary structure, the glycine cleavage system is composed of four proteins: P, T, L and H. The cofactor is pyridoxal 5'-phosphate.

It carries out the reaction N(6)-[(R)-lipoyl]-L-lysyl-[glycine-cleavage complex H protein] + glycine + H(+) = N(6)-[(R)-S(8)-aminomethyldihydrolipoyl]-L-lysyl-[glycine-cleavage complex H protein] + CO2. Functionally, the glycine cleavage system catalyzes the degradation of glycine. The P protein binds the alpha-amino group of glycine through its pyridoxal phosphate cofactor; CO(2) is released and the remaining methylamine moiety is then transferred to the lipoamide cofactor of the H protein. This is Glycine dehydrogenase (decarboxylating) from Psychrobacter cryohalolentis (strain ATCC BAA-1226 / DSM 17306 / VKM B-2378 / K5).